We begin with the raw amino-acid sequence, 355 residues long: Phospho-N-acetylmuramoyl-pentapeptide-transferase (355 aa).

10 helical membrane-spanning segments follow: residues 3-23 (GVLIAAMVALVVSLLGTPWVI), 56-76 (VIIVATLVGYFLAHLVTGIGF), 80-100 (GLLVLLVMTGLGIVGFLDDYI), 120-140 (AAVALAFGLLAVRFKNHAGLL), 152-172 (TSLTVGIIGFPLLAWIIIAAT), 185-205 (LAAGTSAMVFGAYVVISFWQF), 224-244 (PLDVALVAAAAMGACFGFLWW), 251-271 (IFMGDTGSLALGGAFASIAIV), 276-296 (LLLVVLGGLFVIETLSVMIQV), and 330-350 (FWIVSGLAVAFGLGLFYAEFL).

Belongs to the glycosyltransferase 4 family. MraY subfamily. Requires Mg(2+) as cofactor.

It is found in the cell membrane. The enzyme catalyses UDP-N-acetyl-alpha-D-muramoyl-L-alanyl-gamma-D-glutamyl-meso-2,6-diaminopimeloyl-D-alanyl-D-alanine + di-trans,octa-cis-undecaprenyl phosphate = di-trans,octa-cis-undecaprenyl diphospho-N-acetyl-alpha-D-muramoyl-L-alanyl-D-glutamyl-meso-2,6-diaminopimeloyl-D-alanyl-D-alanine + UMP. It participates in cell wall biogenesis; peptidoglycan biosynthesis. In terms of biological role, catalyzes the initial step of the lipid cycle reactions in the biosynthesis of the cell wall peptidoglycan: transfers peptidoglycan precursor phospho-MurNAc-pentapeptide from UDP-MurNAc-pentapeptide onto the lipid carrier undecaprenyl phosphate, yielding undecaprenyl-pyrophosphoryl-MurNAc-pentapeptide, known as lipid I. This Frankia alni (strain DSM 45986 / CECT 9034 / ACN14a) protein is Phospho-N-acetylmuramoyl-pentapeptide-transferase.